The primary structure comprises 65 residues: Large ribosomal subunit protein bL35 (65 aa).

It belongs to the bacterial ribosomal protein bL35 family.

The protein is Large ribosomal subunit protein bL35 of Blochmanniella pennsylvanica (strain BPEN).